A 241-amino-acid polypeptide reads, in one-letter code: ATP-dependent Clp protease ATP-binding subunit CLPT2, chloroplastic (241 aa).

The N-terminal 75 residues, 1 to 75 (MAAHSSCNFA…PRRIHKSAIS (75 aa)), are a transit peptide targeting the chloroplast. The Clp R domain maps to 91–237 (KPKWSWRAIK…ELESFASESG (147 aa)). Repeat regions lie at residues 94–159 (WSWR…LGKA) and 171–237 (LTED…SESG).

The protein belongs to the ClpA/ClpB family. Monomer and homodimer. The dimers monomerize before association to the P-ring. Component of the chloroplastic Clp protease core complex which consist of at least 16 proteins: CLPP4 (3 copies), CLPP5 (3 copies), CLPR4 (2 copies), ClpP1 (1 copy), CLPP6 (1 copy), CLPR2 (1 copy), CLPT1 (1 copy), CLPT2 (1 copy) and 3 copies of CLPP3 and/or CLPR1 and/or CLPR3. Interacts with AHK2. Interacts with CPN21. No interactions with CLPS1.

The protein localises to the plastid. The protein resides in the chloroplast. Functionally, accessory protein regulating the assembly of the plastidial Clp protease system. CLPT1 first binds to the heptameric P-ring containing the CLP3-6 subunits followed by CLPT2, and only then does the P-ring combine with the R-ring composed of the clpP1 and CLPR1-4 subunits. Once the core complex is fully assembled, it then associates to the CLPC chaperone partner to form the functional protease. CLPT2 and CLPT1 are partially redundant. This Arabidopsis thaliana (Mouse-ear cress) protein is ATP-dependent Clp protease ATP-binding subunit CLPT2, chloroplastic.